The chain runs to 449 residues: Clusterin (449 aa).

Residues 1–21 (MKTLLLLVGLLLTLENGQVLG) form the signal peptide. Residues 77–80 (KKKK) carry the Nuclear localization signal motif. Residues N85 and N102 are each glycosylated (N-linked (GlcNAc...) asparagine). Disulfide bonds link C101/C313, C112/C305, C115/C302, C120/C295, and C128/C285. The residue at position 132 (S132) is a Phosphoserine. Residues N144, N291, N328, N354, and N374 are each glycosylated (N-linked (GlcNAc...) asparagine). Residue S396 is modified to Phosphoserine. A Nuclear localization signal motif is present at residues 443 to 447 (RQKNR).

This sequence belongs to the clusterin family. As to quaternary structure, antiparallel disulfide-linked heterodimer of an alpha chain and a beta chain. Self-associates and forms higher oligomers. Interacts with a broad range of misfolded proteins, including APP, APOC2 and LYZ. Slightly acidic pH promotes interaction with misfolded proteins. Forms high-molecular weight oligomers upon interaction with misfolded proteins. Interacts with APOA1, LRP2, CLUAP1 and PON1. Interacts with the complement membrane attack complex. Interacts (via alpha chain) with XRCC6. Interacts with SYVN1, COMMD1, BTRC, CUL1 and with ubiquitin and SCF (SKP1-CUL1-F-box protein) E3 ubiquitin-protein ligase complexes. Interacts (via alpha chain) with BAX in stressed cells, where BAX undergoes a conformation change leading to association with the mitochondrial membrane. Does not interact with BAX in unstressed cells. Found in a complex with LTF, CLU, EPPIN and SEMG1. Interacts (immaturely glycosylated pre-secreted form) with HSPA5; this interaction promotes CLU stability and facilitates stress-induced CLU retrotranslocation from the secretory pathway to the mitochondria, thereby reducing stress-induced apoptosis by stabilizing mitochondrial membrane integrity. Interacts with BCL2L1; this interaction releases and activates BAX and promotes cell death. Interacts with TGFBR2 and ACVR1. Interacts (secreted form) with STMN3; this interaction may act as an important modulator during neuronal differentiation. Interacts with VLDLR and LRP8. Post-translationally, proteolytically cleaved on its way through the secretory system, probably within the Golgi lumen. Proteolytic cleavage is not necessary for its chaperone activity. All non-secreted forms are not proteolytically cleaved. Chaperone activity of uncleaved forms is dependent on a non-reducing environment. In terms of processing, polyubiquitinated, leading to proteasomal degradation. Under cellular stress, the intracellular level of cleaved form is reduced due to proteasomal degradation. Heavily N-glycosylated. About 30% of the protein mass is comprised of complex N-linked carbohydrate. Endoplasmic reticulum (ER) stress induces changes in glycosylation status and increases level of hypoglycosylated forms. Core carbohydrates are essential for chaperone activity. Non-secreted forms are hypoglycosylated or unglycosylated.

The protein resides in the secreted. It is found in the nucleus. It localises to the cytoplasm. The protein localises to the mitochondrion membrane. Its subcellular location is the cytosol. The protein resides in the microsome. It is found in the endoplasmic reticulum. It localises to the mitochondrion. The protein localises to the perinuclear region. Its subcellular location is the cytoplasmic vesicle. The protein resides in the secretory vesicle. It is found in the chromaffin granule. Its function is as follows. Functions as extracellular chaperone that prevents aggregation of non native proteins. Prevents stress-induced aggregation of blood plasma proteins. Inhibits formation of amyloid fibrils by APP, APOC2, B2M, CALCA, CSN3, SNCA and aggregation-prone LYZ variants (in vitro). Does not require ATP. Maintains partially unfolded proteins in a state appropriate for subsequent refolding by other chaperones, such as HSPA8/HSC70. Does not refold proteins by itself. Binding to cell surface receptors triggers internalization of the chaperone-client complex and subsequent lysosomal or proteasomal degradation. When secreted, protects cells against apoptosis and against cytolysis by complement: inhibits assembly of the complement membrane attack complex (MAC) by preventing polymerization of C9 pore component of the MAC complex. Intracellular forms interact with ubiquitin and SCF (SKP1-CUL1-F-box protein) E3 ubiquitin-protein ligase complexes and promote the ubiquitination and subsequent proteasomal degradation of target proteins. Promotes proteasomal degradation of COMMD1 and IKBKB. Modulates NF-kappa-B transcriptional activity. Following stress, promotes apoptosis. Inhibits apoptosis when associated with the mitochondrial membrane by interference with BAX-dependent release of cytochrome c into the cytoplasm. Plays a role in the regulation of cell proliferation. An intracellular form suppresses stress-induced apoptosis by stabilizing mitochondrial membrane integrity through interaction with HSPA5. Secreted form does not affect caspase or BAX-mediated intrinsic apoptosis and TNF-induced NF-kappa-B-activity. Secreted form act as an important modulator during neuronal differentiation through interaction with STMN3. Plays a role in the clearance of immune complexes that arise during cell injury. The sequence is that of Clusterin (CLU) from Equus caballus (Horse).